We begin with the raw amino-acid sequence, 245 residues long: MKIDVLTLFPNMFTGVLNESILKRAQEKGAVTFQLVNFREFADNKHQTVDDYPYGGGAGMVLKPQPIFDAVDHVTKQSEHRPRVILLCPQGERYTQKKAEELAKERHIIFICGHYEGYDERIREHLVTDEISIGDYVLTGGELAAMVVIDSVVRLLPGVLGNEHSSMLDSYSSGLLEHPHYTRPADFRGMKVPDVLLSGNHRLIEEWRQKESLRRTWLRRPDLLETYELTEQQKKWIEQWKKNER.

S-adenosyl-L-methionine contacts are provided by residues Gly-113 and 133 to 138; that span reads IGDYVL.

It belongs to the RNA methyltransferase TrmD family. In terms of assembly, homodimer.

The protein localises to the cytoplasm. The enzyme catalyses guanosine(37) in tRNA + S-adenosyl-L-methionine = N(1)-methylguanosine(37) in tRNA + S-adenosyl-L-homocysteine + H(+). In terms of biological role, specifically methylates guanosine-37 in various tRNAs. The sequence is that of tRNA (guanine-N(1)-)-methyltransferase from Anoxybacillus flavithermus (strain DSM 21510 / WK1).